Consider the following 645-residue polypeptide: Pro-neuregulin-1, membrane-bound isoform (645 aa).

Positions 1 to 19 (MSERKEGRGKGKGKKKDRG) are excised as a propeptide. A disordered region spans residues 1–52 (MSERKEGRGKGKGKKKDRGSRGKPAPAEGDPSPALPPRLKEMKSQESAAGSK). The Extracellular portion of the chain corresponds to 20–247 (SRGKPAPAEG…MEAEELYQKR (228 aa)). The region spanning 37–128 (PRLKEMKSQE…GNDSASANIT (92 aa)) is the Ig-like C2-type domain. Cys-57 and Cys-112 are disulfide-bonded. Polar residues predominate over residues 139-164 (MSASTERPYVSSESPIRISVSTEGAN). Residues 139–175 (MSASTERPYVSSESPIRISVSTEGANTSSSTSTSTTG) are disordered. A compositionally biased stretch (low complexity) spans 165–175 (TSSSTSTSTTG). Residues 178 to 222 (HLIKCAEKEKTFCVNGGECFMVKDLSNPSRYLCKCPNEFTGDRCQ) enclose the EGF-like domain. 3 disulfide bridges follow: Cys-182–Cys-196, Cys-190–Cys-210, and Cys-212–Cys-221. Residues 248–268 (VLTITGICIALLVVGIMCVVA) form a helical membrane-spanning segment. Residues 269 to 645 (YCKTKKQRQK…VIANQDPIAV (377 aa)) are Cytoplasmic-facing. Residues 340–355 (SHYTSTAHHSTTVTQT) show a composition bias toward low complexity. 4 disordered regions span residues 340-364 (SHYTSTAHHSTTVTQTPSHSWSNGH), 380-406 (SVENSRHSSPAGGPRGRLHGLGGPREC), 433-463 (MTTPARMSPVDFHTPSSPKSPPSEMSPPVSS), and 531-593 (ETTQ…DTPF). The span at 392–402 (GPRGRLHGLGG) shows a compositional bias: gly residues. Residues 547–557 (TNSRRAKRTKP) show a composition bias toward basic residues. Residues 568 to 579 (DSNPSSVSSNSE) are compositionally biased toward low complexity.

The protein belongs to the neuregulin family. The cytoplasmic domain interacts with the LIM domain region of LIMK1. Forms a ternary complex with ERBB3 and ITGAV:ITGB3 or ITGA6:ITGB4. Interacts with NRDC and BACE1. In terms of processing, proteolytic cleavage close to the plasma membrane on the external face leads to the release of the soluble growth factor form. N- and O-glycosylated. Extensive glycosylation precedes the proteolytic cleavage.

Its subcellular location is the cell membrane. The protein resides in the secreted. In terms of biological role, direct ligand for ERBB3 and ERBB4 tyrosine kinase receptors. Concomitantly recruits ERBB1 and ERBB2 coreceptors, resulting in ligand-stimulated tyrosine phosphorylation and activation of the ERBB receptors. Perform diverse functions such as inducing growth and differentiation of epithelial, glial, neuronal, and skeletal muscle cells; inducing expression of acetylcholine receptor in synaptic vesicles during the formation of the neuromuscular junction; stimulating lobuloalveolar budding and milk production in the mammary gland and inducing differentiation of mammary tumor cells; stimulating Schwann cell proliferation; implication in the development of the myocardium such as trabeculation of the developing heart. Binds to ERBB4 and ERBB3. Acts as a ligand for integrins and binds (via EGF domain) to integrins ITGAV:ITGB3 or ITGA6:ITGB4. Its binding to integrins and subsequent ternary complex formation with integrins and ERRB3 are essential for NRG1-ERBB signaling. Induces the phosphorylation and activation of MAPK3/ERK1, MAPK1/ERK2 and AKT1, and ligand-dependent ERBB4 endocytosis is essential for the NRG1-mediated activation of these kinases in neurons. The chain is Pro-neuregulin-1, membrane-bound isoform from Mus musculus (Mouse).